We begin with the raw amino-acid sequence, 481 residues long: Xylulose kinase (481 aa).

Residue 81 to 82 (QH) participates in substrate binding. Aspartate 239 acts as the Proton acceptor in catalysis.

It belongs to the FGGY kinase family.

The enzyme catalyses D-xylulose + ATP = D-xylulose 5-phosphate + ADP + H(+). Its function is as follows. Catalyzes the phosphorylation of D-xylulose to D-xylulose 5-phosphate. The protein is Xylulose kinase of Streptomyces rubiginosus.